The following is a 311-amino-acid chain: UPF0324 membrane protein VV1_3166 (311 aa).

10 helical membrane-spanning segments follow: residues 8–28 (FIFALLLCLSPWVSSPTALVL), 51–71 (LLSYSIIGLGFGIQFQQAIAV), 74–94 (DGIGLIVVTIAGTLLLGFLVA), 106–126 (LISAGTAICGGSAIAAVAPAI), 133–153 (IALALATVFVLNSLALFIFPV), 165–185 (FGTWAAIAIHDTSSVVGAASA), 197–217 (LKLARALWIIPVALLSAILFA), 228–248 (LVLPYFIFWYCAAIAFSDLFP), 256–276 (GIFSVAKQALVVCLFLIGCSI), and 289–309 (LIFGLSLWVVISTTSLSWLLL).

It belongs to the UPF0324 family.

The protein resides in the cell membrane. This chain is UPF0324 membrane protein VV1_3166, found in Vibrio vulnificus (strain CMCP6).